The following is a 513-amino-acid chain: Probable G-protein coupled receptor 176 (513 aa).

The segment at 1–25 is disordered; the sequence is MGHNGSWVSPNTSHPRNTSGAQAGA. The Extracellular segment spans residues 1–41; that stretch reads MGHNGSWVSPNTSHPRNTSGAQAGANSSAFGELSEAQLYRQ. Asparagine 4, asparagine 11, asparagine 17, and asparagine 26 each carry an N-linked (GlcNAc...) asparagine glycan. A helical membrane pass occupies residues 42 to 64; that stretch reads FTTTVQVVIFIGSLLGNFTVLWS. The Cytoplasmic portion of the chain corresponds to 65–77; the sequence is TCRTTVFKSVTNR. The helical transmembrane segment at 78 to 98 threads the bilayer; that stretch reads FIKNLACSGICASVVCVPFDI. Residues 99–108 are Extracellular-facing; that stretch reads ILSTSPHCCW. Residues 109–129 form a helical membrane-spanning segment; it reads WIYTMLFCKVLKFLHKVFCSV. Topologically, residues 130 to 157 are cytoplasmic; sequence TVLSFPAIALDRYYSVLYPLERKISDAK. The chain crosses the membrane as a helical span at residues 158–177; that stretch reads SRELVMYIWAHAVVASVPVF. At 178-204 the chain is on the extracellular side; the sequence is AVTNVADIYATSTCTEVWSNSLGHLVY. The chain crosses the membrane as a helical span at residues 205-225; sequence VLIYNVTTVIVPVAVVFLFLI. Topologically, residues 226 to 264 are cytoplasmic; it reads LIRRALSASQKKKVIIAALRTPQNTISIPYASQREAELH. Residues 265–285 traverse the membrane as a helical segment; it reads ATLLSMVTVFILCSVPYATLV. Over 286 to 301 the chain is Extracellular; sequence VYQTVLNVPNTSVFLL. The helical transmembrane segment at 302 to 322 threads the bilayer; the sequence is LTAIWLPKVSLLANPVLFLTV. At 323-513 the chain is on the cytoplasmic side; it reads NRSVRKCLVG…KVSIFPKVDS (191 aa). The segment at 404-432 is disordered; it reads VLTSSPEGEESQLAPSVPPPGTVDSVSRV.

The protein belongs to the G-protein coupled receptor 1 family. Expressed in brain, lung, heart, stomach, intestine, cultured aortic smooth muscle cells and cardiac myocytes.

Its subcellular location is the cell membrane. Functionally, orphan receptor involved in normal circadian rhythm behavior. Acts through the G-protein subclass G(z)-alpha and has an agonist-independent basal activity to repress cAMP production. The protein is Probable G-protein coupled receptor 176 (Gpr176) of Rattus norvegicus (Rat).